Reading from the N-terminus, the 116-residue chain is MSSMRAERVGEQMKKELMDIINNKVKDPRVGFITITDVVLTNDLSQAKVFLTVLGNDKEVENTFKALDKAKGFIKSELGSRMRLRIMPELMYEYDQSIEYGNKIERMIQDLHKQDR.

It belongs to the RbfA family. As to quaternary structure, monomer. Binds 30S ribosomal subunits, but not 50S ribosomal subunits or 70S ribosomes.

Its subcellular location is the cytoplasm. Functionally, one of several proteins that assist in the late maturation steps of the functional core of the 30S ribosomal subunit. Associates with free 30S ribosomal subunits (but not with 30S subunits that are part of 70S ribosomes or polysomes). Required for efficient processing of 16S rRNA. May interact with the 5'-terminal helix region of 16S rRNA. This chain is Ribosome-binding factor A, found in Staphylococcus aureus (strain JH9).